The following is a 98-amino-acid chain: MSTIEQSAKGKKDGDIRYLTPLNIETNKTKKYCRFKKSGIKYIDYKDADFLLKFVNEQGKILPRRLTGTSLKYQRKVSVAVKRARHLALMPYVADLLK.

It belongs to the bacterial ribosomal protein bS18 family. Part of the 30S ribosomal subunit. Forms a tight heterodimer with protein bS6.

Its function is as follows. Binds as a heterodimer with protein bS6 to the central domain of the 16S rRNA, where it helps stabilize the platform of the 30S subunit. The sequence is that of Small ribosomal subunit protein bS18 from Flavobacterium johnsoniae (strain ATCC 17061 / DSM 2064 / JCM 8514 / BCRC 14874 / CCUG 350202 / NBRC 14942 / NCIMB 11054 / UW101) (Cytophaga johnsonae).